The following is a 505-amino-acid chain: Forkhead box protein O4 (505 aa).

Residues 1–10 (MDPGNENSAT) are compositionally biased toward polar residues. 2 disordered regions span residues 1-100 (MDPG…RRNA) and 176-246 (SWWM…CSRN). Threonine 32 bears the Phosphothreonine; by PKB/AKT1 mark. Residues 54–64 (LGEKVHTEGRS) show a composition bias toward basic and acidic residues. The segment at residues 100–188 (AWGNQSYAEL…MLNPEGGKSG (89 aa)) is a DNA-binding region (fork-head). Serine 197 bears the Phosphoserine; by PKB/AKT1 mark. Residues 205–216 (LRGRSKAPKKKP) are compositionally biased toward basic residues. Serine 262 is modified (phosphoserine; by PKB/AKT1).

In terms of assembly, interacts with CREBBP/CBP, CTNNB1, MYOCD, SIRT1, SRF and YWHAZ. Acetylated by CREBBP/CBP and deacetylated by SIRT1. Binding of YWHAZ inhibits DNA-binding. Interacts with USP7; the interaction is enhanced in presence of hydrogen peroxide and occurs independently of TP53. Interacts with NLK, and this inhibits monoubiquitination and transcriptional activity. Interacts with FOXK1; the interaction inhibits MEF2C transactivation activity. Post-translationally, acetylation by CREBBP/CBP, which is induced by peroxidase stress, inhibits transcriptional activity. Deacetylation by SIRT1 is NAD-dependent and stimulates transcriptional activity. In terms of processing, phosphorylation by PKB/AKT1 inhibits transcriptional activity and is responsible for cytoplasmic localization. May be phosphorylated at multiple sites by NLK. Monoubiquitinated; monoubiquitination is induced by oxidative stress and reduced by deacetylase inhibitors; results in its relocalization to the nucleus and its increased transcriptional activity. Deubiquitinated by USP7; deubiquitination is induced by oxidative stress; enhances its interaction with USP7 and consequently, deubiquitination; increases its translocation to the cytoplasm and inhibits its transcriptional activity. Hydrogene-peroxide-induced ubiquitination and USP7-mediated deubiquitination have no major effect on its protein stability. As to expression, heart, brain, placenta, lung, liver, skeletal muscle, kidney and pancreas. Isoform zeta is most abundant in the liver, kidney, and pancreas.

It localises to the cytoplasm. It is found in the nucleus. Its function is as follows. Transcription factor involved in the regulation of the insulin signaling pathway. Binds to insulin-response elements (IREs) and can activate transcription of IGFBP1. Down-regulates expression of HIF1A and suppresses hypoxia-induced transcriptional activation of HIF1A-modulated genes. Also involved in negative regulation of the cell cycle. Involved in increased proteasome activity in embryonic stem cells (ESCs) by activating expression of PSMD11 in ESCs, leading to enhanced assembly of the 26S proteasome, followed by higher proteasome activity. In Homo sapiens (Human), this protein is Forkhead box protein O4 (FOXO4).